Reading from the N-terminus, the 87-residue chain is Large ribosomal subunit protein bL31B (87 aa).

Belongs to the bacterial ribosomal protein bL31 family. Type B subfamily. As to quaternary structure, part of the 50S ribosomal subunit.

In Shigella boydii serotype 4 (strain Sb227), this protein is Large ribosomal subunit protein bL31B.